The following is a 179-amino-acid chain: Large ribosomal subunit protein uL6 (179 aa).

It belongs to the universal ribosomal protein uL6 family. In terms of assembly, part of the 50S ribosomal subunit.

In terms of biological role, this protein binds to the 23S rRNA, and is important in its secondary structure. It is located near the subunit interface in the base of the L7/L12 stalk, and near the tRNA binding site of the peptidyltransferase center. The sequence is that of Large ribosomal subunit protein uL6 from Synechococcus sp. (strain RCC307).